The primary structure comprises 62 residues: Chromatin protein Cren7 1 (62 aa).

This sequence belongs to the Cren7 family. In terms of assembly, monomer. Post-translationally, methylated at multiple sites, to varying extents.

Its subcellular location is the chromosome. The protein localises to the cytoplasm. Its function is as follows. A chromatin protein, binds double-stranded DNA without sequence specificity. Constrains negative DNA supercoils. This chain is Chromatin protein Cren7 1 (cren7-1), found in Hyperthermus butylicus (strain DSM 5456 / JCM 9403 / PLM1-5).